We begin with the raw amino-acid sequence, 1388 residues long: DNA-directed RNA polymerase subunit beta' (1388 aa).

The Zn(2+) site is built by Cys70, Cys72, Cys85, and Cys88. Mg(2+)-binding residues include Asp461, Asp463, and Asp465. Positions 808, 882, 889, and 892 each coordinate Zn(2+).

Belongs to the RNA polymerase beta' chain family. As to quaternary structure, the RNAP catalytic core consists of 2 alpha, 1 beta, 1 beta' and 1 omega subunit. When a sigma factor is associated with the core the holoenzyme is formed, which can initiate transcription. Mg(2+) serves as cofactor. The cofactor is Zn(2+).

It carries out the reaction RNA(n) + a ribonucleoside 5'-triphosphate = RNA(n+1) + diphosphate. Functionally, DNA-dependent RNA polymerase catalyzes the transcription of DNA into RNA using the four ribonucleoside triphosphates as substrates. The sequence is that of DNA-directed RNA polymerase subunit beta' from Acidiphilium cryptum (strain JF-5).